A 178-amino-acid polypeptide reads, in one-letter code: Ribosome maturation factor RimM (178 aa).

The PRC barrel domain maps to 98–178; the sequence is DGEYYWNQLE…RILVDWDPEF (81 aa).

Belongs to the RimM family. As to quaternary structure, binds ribosomal protein uS19.

The protein resides in the cytoplasm. In terms of biological role, an accessory protein needed during the final step in the assembly of 30S ribosomal subunit, possibly for assembly of the head region. Essential for efficient processing of 16S rRNA. May be needed both before and after RbfA during the maturation of 16S rRNA. It has affinity for free ribosomal 30S subunits but not for 70S ribosomes. The protein is Ribosome maturation factor RimM of Cellvibrio japonicus (strain Ueda107) (Pseudomonas fluorescens subsp. cellulosa).